We begin with the raw amino-acid sequence, 376 residues long: N-acetyldiaminopimelate deacetylase (376 aa).

Residue aspartate 69 is part of the active site. Glutamate 127 acts as the Proton acceptor in catalysis.

It belongs to the peptidase M20A family. N-acetyldiaminopimelate deacetylase subfamily.

The catalysed reaction is N-acetyl-(2S,6S)-2,6-diaminopimelate + H2O = (2S,6S)-2,6-diaminopimelate + acetate. It functions in the pathway amino-acid biosynthesis; L-lysine biosynthesis via DAP pathway; LL-2,6-diaminopimelate from (S)-tetrahydrodipicolinate (acetylase route): step 3/3. In terms of biological role, catalyzes the conversion of N-acetyl-diaminopimelate to diaminopimelate and acetate. The protein is N-acetyldiaminopimelate deacetylase of Lactococcus lactis subsp. cremoris (strain SK11).